A 404-amino-acid polypeptide reads, in one-letter code: Probable tRNA sulfurtransferase (404 aa).

The THUMP domain maps to 60–165 (RSVIEALKPV…DEAAYLSHED (106 aa)). ATP-binding positions include 183–184 (ML), 208–209 (HF), arginine 265, glycine 287, and glutamine 296.

This sequence belongs to the ThiI family.

It localises to the cytoplasm. The enzyme catalyses [ThiI sulfur-carrier protein]-S-sulfanyl-L-cysteine + a uridine in tRNA + 2 reduced [2Fe-2S]-[ferredoxin] + ATP + H(+) = [ThiI sulfur-carrier protein]-L-cysteine + a 4-thiouridine in tRNA + 2 oxidized [2Fe-2S]-[ferredoxin] + AMP + diphosphate. The catalysed reaction is [ThiS sulfur-carrier protein]-C-terminal Gly-Gly-AMP + S-sulfanyl-L-cysteinyl-[cysteine desulfurase] + AH2 = [ThiS sulfur-carrier protein]-C-terminal-Gly-aminoethanethioate + L-cysteinyl-[cysteine desulfurase] + A + AMP + 2 H(+). Its pathway is cofactor biosynthesis; thiamine diphosphate biosynthesis. In terms of biological role, catalyzes the ATP-dependent transfer of a sulfur to tRNA to produce 4-thiouridine in position 8 of tRNAs, which functions as a near-UV photosensor. Also catalyzes the transfer of sulfur to the sulfur carrier protein ThiS, forming ThiS-thiocarboxylate. This is a step in the synthesis of thiazole, in the thiamine biosynthesis pathway. The sulfur is donated as persulfide by IscS. In Streptococcus equi subsp. equi (strain 4047), this protein is Probable tRNA sulfurtransferase.